A 499-amino-acid chain; its full sequence is Glutamate--tRNA ligase (499 aa).

The 'HIGH' region signature appears at 12-22; that stretch reads PSPTGHLHIGN. Residues 259 to 263 carry the 'KMSKS' region motif; sequence KLSKR. ATP is bound at residue lysine 262.

Belongs to the class-I aminoacyl-tRNA synthetase family. Glutamate--tRNA ligase type 1 subfamily. Monomer.

The protein localises to the cytoplasm. The catalysed reaction is tRNA(Glu) + L-glutamate + ATP = L-glutamyl-tRNA(Glu) + AMP + diphosphate. Functionally, catalyzes the attachment of glutamate to tRNA(Glu) in a two-step reaction: glutamate is first activated by ATP to form Glu-AMP and then transferred to the acceptor end of tRNA(Glu). The chain is Glutamate--tRNA ligase from Lactobacillus gasseri (strain ATCC 33323 / DSM 20243 / BCRC 14619 / CIP 102991 / JCM 1131 / KCTC 3163 / NCIMB 11718 / NCTC 13722 / AM63).